Reading from the N-terminus, the 260-residue chain is Indole-3-glycerol phosphate synthase (260 aa).

Belongs to the TrpC family.

It carries out the reaction 1-(2-carboxyphenylamino)-1-deoxy-D-ribulose 5-phosphate + H(+) = (1S,2R)-1-C-(indol-3-yl)glycerol 3-phosphate + CO2 + H2O. It participates in amino-acid biosynthesis; L-tryptophan biosynthesis; L-tryptophan from chorismate: step 4/5. The protein is Indole-3-glycerol phosphate synthase of Staphylococcus aureus (strain COL).